Consider the following 191-residue polypeptide: tRNA-specific adenosine deaminase 2 (191 aa).

The 126-residue stretch at 20–145 folds into the CMP/dCMP-type deaminase domain; that stretch reads EETEKWMEEA…SVLNIASADL (126 aa). H71 lines the Zn(2+) pocket. Residue E73 is the Proton donor of the active site. Residues C107 and C110 each contribute to the Zn(2+) site.

This sequence belongs to the cytidine and deoxycytidylate deaminase family. ADAT2 subfamily. Zn(2+) serves as cofactor.

The catalysed reaction is adenosine(34) in tRNA + H2O + H(+) = inosine(34) in tRNA + NH4(+). Functionally, probably participates in deamination of adenosine-34 to inosine in many tRNAs. The polypeptide is tRNA-specific adenosine deaminase 2 (ADAT2) (Homo sapiens (Human)).